A 379-amino-acid chain; its full sequence is Phospholipase A1 (379 aa).

The first 20 residues, 1–20, serve as a signal peptide directing secretion; it reads MKFITAILVIFCVYLLSTAG. The propeptide occupies 21–73; that stretch reads DSKILPLKKLPSKIFGHLKSHVDNTVKKPLKVFGHLKSHVENSVGPLRMNKLT. An intrachain disulfide couples Cys76 to Cys154. Asn126 is a glycosylation site (N-linked (GlcNAc...) asparagine). The active-site Nucleophile is Ser204. Residue Asp232 is the Charge relay system of the active site. 2 disulfide bridges follow: Cys243/Cys248 and Cys285/Cys291. The active-site Charge relay system is the His293.

Belongs to the AB hydrolase superfamily. Lipase family. Contains five disulfide bonds. As to expression, expressed by the venom gland.

The protein localises to the secreted. It catalyses the reaction a 1,2-diacyl-sn-glycero-3-phosphocholine + H2O = a 2-acyl-sn-glycero-3-phosphocholine + a fatty acid + H(+). Its function is as follows. Catalyzes the hydrolysis of phosphatidylcholine with phospholipase A1 activity. May act as an allergen and induce hemolytic activity. This chain is Phospholipase A1, found in Dinoponera quadriceps (South American ant).